The primary structure comprises 338 residues: Ferrochelatase (338 aa).

2 residues coordinate Fe cation: histidine 189 and glutamate 294.

The protein belongs to the ferrochelatase family.

It localises to the cytoplasm. The enzyme catalyses heme b + 2 H(+) = protoporphyrin IX + Fe(2+). It participates in porphyrin-containing compound metabolism; protoheme biosynthesis; protoheme from protoporphyrin-IX: step 1/1. Its function is as follows. Catalyzes the ferrous insertion into protoporphyrin IX. This Pseudomonas putida (strain ATCC 700007 / DSM 6899 / JCM 31910 / BCRC 17059 / LMG 24140 / F1) protein is Ferrochelatase.